The following is a 488-amino-acid chain: L-amino oxidase (488 aa).

Residues 60–61 (MS), 80–81 (EA), Arg88, and 104–107 (GPMR) contribute to the FAD site. Positions 107 and 388 each coordinate substrate. The cysteines at positions 347 and 428 are disulfide-linked. Residues Glu474 and 481 to 486 (GWIDST) each bind FAD. Substrate is bound at residue 481-482 (GW).

This sequence belongs to the flavin monoamine oxidase family. FIG1 subfamily. In terms of assembly, monomer. This is in contrast with most of its orthologs, that are non-covalently linked homodimers. FAD serves as cofactor. N-glycosylated. In terms of tissue distribution, expressed by the venom gland.

Its subcellular location is the secreted. It carries out the reaction an L-alpha-amino acid + O2 + H2O = a 2-oxocarboxylate + H2O2 + NH4(+). It catalyses the reaction L-leucine + O2 + H2O = 4-methyl-2-oxopentanoate + H2O2 + NH4(+). Catalyzes an oxidative deamination of predominantly hydrophobic and aromatic L-amino acids, thus producing hydrogen peroxide that may contribute to the diverse toxic effects of this enzyme. Shows activity on L-Leu. Exhibits diverse biological activities, such as hemorrhage, hemolysis, edema, antibacterial and antiparasitic activities, as well as regulation of platelet aggregation. When tested on SW480 and SW620 human colon cancer cells, shows inhibition of cell proliferation, and induction of apoptosis, which is probably a consequence of the increased caspase-3 activity and the decreased Bcl-2 expression. This chain is L-amino oxidase, found in Trimeresurus purpureomaculatus (Mangrove pit viper).